Consider the following 445-residue polypeptide: Response regulator protein PilR (445 aa).

Residues 5 to 119 (KALIVDDEPD…RLRELVATAL (115 aa)) enclose the Response regulatory domain. Residues Asp11 and Asp54 each carry the 4-aspartylphosphate modification. A Sigma-54 factor interaction domain is found at 135–364 (LLGESPPMRA…LENMLERAYT (230 aa)). Residues 163 to 170 (GESGSGKE) and 226 to 235 (ASGGTLFLDE) each bind ATP. A DNA-binding region (H-T-H motif) is located at residues 418 to 437 (RWNRTAAAQRLGLTFRSMRY).

In terms of processing, phosphorylated by PilS.

Its subcellular location is the cytoplasm. Its function is as follows. Member of the two-component regulatory system PilS/PilR that regulates the expression of multiple genes including the type IV pilus (T4P) major subunit PilA. Thereby, plays a major role in the regulation of multiple motility pathways. Upon appropriate environmental signals, the histidine kinase PilS transfers the phosphoryl group onto PilR. In turn, PilR functions as a transcriptional activator by direct binding to a cis-acting sequence upstream of the pilin gene promoter leading to its activation. In Pseudomonas aeruginosa (strain ATCC 15692 / DSM 22644 / CIP 104116 / JCM 14847 / LMG 12228 / 1C / PRS 101 / PAO1), this protein is Response regulator protein PilR (pilR).